A 305-amino-acid polypeptide reads, in one-letter code: Methionyl-tRNA formyltransferase (305 aa).

Residue 108 to 111 (SLLP) participates in (6S)-5,6,7,8-tetrahydrofolate binding.

Belongs to the Fmt family.

The catalysed reaction is L-methionyl-tRNA(fMet) + (6R)-10-formyltetrahydrofolate = N-formyl-L-methionyl-tRNA(fMet) + (6S)-5,6,7,8-tetrahydrofolate + H(+). Attaches a formyl group to the free amino group of methionyl-tRNA(fMet). The formyl group appears to play a dual role in the initiator identity of N-formylmethionyl-tRNA by promoting its recognition by IF2 and preventing the misappropriation of this tRNA by the elongation apparatus. In Clavibacter michiganensis subsp. michiganensis (strain NCPPB 382), this protein is Methionyl-tRNA formyltransferase.